Reading from the N-terminus, the 596-residue chain is Proline--tRNA ligase (596 aa).

Belongs to the class-II aminoacyl-tRNA synthetase family. ProS type 1 subfamily. As to quaternary structure, homodimer.

The protein resides in the cytoplasm. The enzyme catalyses tRNA(Pro) + L-proline + ATP = L-prolyl-tRNA(Pro) + AMP + diphosphate. Its function is as follows. Catalyzes the attachment of proline to tRNA(Pro) in a two-step reaction: proline is first activated by ATP to form Pro-AMP and then transferred to the acceptor end of tRNA(Pro). As ProRS can inadvertently accommodate and process non-cognate amino acids such as alanine and cysteine, to avoid such errors it has two additional distinct editing activities against alanine. One activity is designated as 'pretransfer' editing and involves the tRNA(Pro)-independent hydrolysis of activated Ala-AMP. The other activity is designated 'posttransfer' editing and involves deacylation of mischarged Ala-tRNA(Pro). The misacylated Cys-tRNA(Pro) is not edited by ProRS. This Prochlorococcus marinus (strain NATL2A) protein is Proline--tRNA ligase.